Reading from the N-terminus, the 107-residue chain is U1-lycotoxin-Ls1v (107 aa).

The first 20 residues, 1 to 20 (MMKVLVVVALLVTLISYSSS), serve as a signal peptide directing secretion. The propeptide occupies 21-41 (EGIDDLEADELLSLTANEQTR). 4 disulfide bridges follow: cysteine 44–cysteine 59, cysteine 51–cysteine 68, cysteine 58–cysteine 86, and cysteine 70–cysteine 84.

This sequence belongs to the neurotoxin 19 (CSTX) family. 04 (U1-Lctx) subfamily. As to expression, expressed by the venom gland.

It is found in the secreted. This is U1-lycotoxin-Ls1v from Lycosa singoriensis (Wolf spider).